The primary structure comprises 194 residues: Putative manganese efflux pump MntP (194 aa).

The next 6 helical transmembrane spans lie at 3–23, 37–57, 65–85, 112–132, 137–157, and 170–190; these read PITT…AAIG, LYVA…GWLL, IATF…IHMI, LAAT…SMAF, IGIV…FGVM, and AEIV…YEHL.

The protein belongs to the MntP (TC 9.B.29) family.

It is found in the cell inner membrane. Probably functions as a manganese efflux pump. This Xylella fastidiosa (strain M23) protein is Putative manganese efflux pump MntP.